Here is a 132-residue protein sequence, read N- to C-terminus: S-protein homolog 15 (132 aa).

Positions 1-20 (MSRLIFFILVTAIYFVGNEA) are cleaved as a signal peptide.

It belongs to the plant self-incompatibility (S1) protein family.

It is found in the secreted. The chain is S-protein homolog 15 from Arabidopsis thaliana (Mouse-ear cress).